The chain runs to 619 residues: Replication restart protein PriA (619 aa).

Positions 119 to 285 (LKELQKHPAS…KDKALVRLKG (167 aa)) constitute a Helicase ATP-binding domain. 132 to 139 (GDTGSGKT) contributes to the ATP binding site. The DEAH box signature appears at 228–231 (DEEH). The Zn(2+) site is built by C336, C339, C345, C348, C363, C366, C376, and C379. Residues 371–532 (PIPKICNACQ…ELYPPFSRLC (162 aa)) enclose the Helicase C-terminal domain.

It belongs to the helicase family. PriA subfamily. As to quaternary structure, component of the replication restart primosome. The cofactor is Zn(2+).

The catalysed reaction is Couples ATP hydrolysis with the unwinding of duplex DNA by translocating in the 3'-5' direction.. It carries out the reaction ATP + H2O = ADP + phosphate + H(+). Initiates the restart of stalled replication forks, which reloads the replicative helicase on sites other than the origin of replication. Recognizes and binds to abandoned replication forks and remodels them to uncover a helicase loading site. Promotes assembly of the primosome at these replication forks. The polypeptide is Replication restart protein PriA (Helicobacter pylori (strain J99 / ATCC 700824) (Campylobacter pylori J99)).